Reading from the N-terminus, the 390-residue chain is Exodeoxyribonuclease 7 large subunit (390 aa).

Belongs to the XseA family. Heterooligomer composed of large and small subunits.

The protein resides in the cytoplasm. The enzyme catalyses Exonucleolytic cleavage in either 5'- to 3'- or 3'- to 5'-direction to yield nucleoside 5'-phosphates.. Bidirectionally degrades single-stranded DNA into large acid-insoluble oligonucleotides, which are then degraded further into small acid-soluble oligonucleotides. This Synechococcus sp. (strain CC9311) protein is Exodeoxyribonuclease 7 large subunit.